Here is a 359-residue protein sequence, read N- to C-terminus: Adenosine 3'-phospho 5'-phosphosulfate transporter 1 (359 aa).

7 consecutive transmembrane segments (helical) span residues 26–46, 68–88, 157–177, 184–204, 228–248, 254–276, and 300–320; these read NMKL…YGIL, STFL…VIVL, YSIA…GKIS, TSYG…TSTF, SIIS…IEFI, VFFD…YYTI, and TLIY…LVFG. A disordered region spans residues 332–359; that stretch reads KKHGGHSHGGSNAATTTTPSNNSNNTEK. A compositionally biased stretch (low complexity) spans 340-359; it reads GGSNAATTTTPSNNSNNTEK.

It belongs to the nucleotide-sugar transporter family. SLC35B subfamily.

The protein resides in the golgi apparatus membrane. The enzyme catalyses 3'-phosphoadenylyl sulfate(in) + adenosine 3',5'-bisphosphate(out) = 3'-phosphoadenylyl sulfate(out) + adenosine 3',5'-bisphosphate(in). Its function is as follows. Probably functions as a 3'-phosphoadenylyl sulfate:adenosine 3',5'-bisphosphate antiporter at the Golgi membranes. Mediates the transport from the cytosol into the lumen of the Golgi of 3'-phosphoadenylyl sulfate/adenosine 3'-phospho 5'-phosphosulfate (PAPS), a universal sulfuryl donor for sulfation events that take place in that compartment. This Dictyostelium discoideum (Social amoeba) protein is Adenosine 3'-phospho 5'-phosphosulfate transporter 1 (slc35b2).